Reading from the N-terminus, the 333-residue chain is Biotin synthase (333 aa).

Residues 47-276 enclose the Radical SAM core domain; it reads YYGKKVKLNM…TKEIRISGGR (230 aa). 3 residues coordinate [4Fe-4S] cluster: Cys-65, Cys-69, and Cys-72. [2Fe-2S] cluster is bound by residues Cys-109, Cys-141, Cys-201, and Arg-271.

It belongs to the radical SAM superfamily. Biotin synthase family. As to quaternary structure, homodimer. It depends on [4Fe-4S] cluster as a cofactor. [2Fe-2S] cluster is required as a cofactor.

It carries out the reaction (4R,5S)-dethiobiotin + (sulfur carrier)-SH + 2 reduced [2Fe-2S]-[ferredoxin] + 2 S-adenosyl-L-methionine = (sulfur carrier)-H + biotin + 2 5'-deoxyadenosine + 2 L-methionine + 2 oxidized [2Fe-2S]-[ferredoxin]. It participates in cofactor biosynthesis; biotin biosynthesis; biotin from 7,8-diaminononanoate: step 2/2. Its function is as follows. Catalyzes the conversion of dethiobiotin (DTB) to biotin by the insertion of a sulfur atom into dethiobiotin via a radical-based mechanism. This is Biotin synthase from Bacillus licheniformis (strain ATCC 14580 / DSM 13 / JCM 2505 / CCUG 7422 / NBRC 12200 / NCIMB 9375 / NCTC 10341 / NRRL NRS-1264 / Gibson 46).